Reading from the N-terminus, the 209-residue chain is Uracil phosphoribosyltransferase (209 aa).

5-phospho-alpha-D-ribose 1-diphosphate is bound by residues Arg-79, Arg-104, and 131 to 139 (DPMLATGNS). Uracil-binding positions include Ile-194 and 199-201 (GDA). Position 200 (Asp-200) interacts with 5-phospho-alpha-D-ribose 1-diphosphate.

Belongs to the UPRTase family. Mg(2+) is required as a cofactor.

It carries out the reaction UMP + diphosphate = 5-phospho-alpha-D-ribose 1-diphosphate + uracil. It participates in pyrimidine metabolism; UMP biosynthesis via salvage pathway; UMP from uracil: step 1/1. With respect to regulation, allosterically activated by GTP. Catalyzes the conversion of uracil and 5-phospho-alpha-D-ribose 1-diphosphate (PRPP) to UMP and diphosphate. The protein is Uracil phosphoribosyltransferase of Rhizobium leguminosarum bv. trifolii (strain WSM2304).